A 556-amino-acid chain; its full sequence is MSVSAFNRRWAAVILEALTRHGVRHICIAPGSRSTPLTLAAAENSAFIHHTHFDERGLGHLALGLAKVSKQPVAVIVTSGTAVANLYPALIEAGLTGEKLILLTADRPPELIDCGANQAIRQPGMFASHPTHSISLPRPTQDIPARWLVSTIDHALGTLHAGGVHINCPFAEPLYGEMDDTGLSWQQRLGDWWQDDKPWLREAPRLESEKQRDWFFWRQKRGVVVAGRMSAEEGKKVTLWAQTLGWPLIGDVLSQTGQPLPCADLWLGNAKAISELQQAQIVVQLGSSLTGKRLLQWQAICEPEEYWIVDDIEGRLDPAHHRGRRLIANIADWLEQHPAEKRQPWCVEIPRLAEQAMQAVIARRDAFGEAQLAHRISDYLPEQGQLFVGNSLVVRLIDALSQLPAGYPVYSNRGASGIDGLLSTAAGVQRASGKPTLAIVGDLSALYDLNALALLRQVSAPLVLIVVNNNGGQIFSLLPTPKNERERFYLMPQNVHFEHAAAMFELKYHRPQNWQELETALADAWRTPTTTVIEMVVNDTDGAQTLQQLLAQVSHL.

The protein belongs to the TPP enzyme family. MenD subfamily. Homodimer. Mg(2+) is required as a cofactor. Mn(2+) serves as cofactor. The cofactor is thiamine diphosphate.

It carries out the reaction isochorismate + 2-oxoglutarate + H(+) = 5-enolpyruvoyl-6-hydroxy-2-succinyl-cyclohex-3-ene-1-carboxylate + CO2. Its pathway is quinol/quinone metabolism; 1,4-dihydroxy-2-naphthoate biosynthesis; 1,4-dihydroxy-2-naphthoate from chorismate: step 2/7. It participates in quinol/quinone metabolism; menaquinone biosynthesis. Its function is as follows. Catalyzes the thiamine diphosphate-dependent decarboxylation of 2-oxoglutarate and the subsequent addition of the resulting succinic semialdehyde-thiamine pyrophosphate anion to isochorismate to yield 2-succinyl-5-enolpyruvyl-6-hydroxy-3-cyclohexene-1-carboxylate (SEPHCHC). The polypeptide is 2-succinyl-5-enolpyruvyl-6-hydroxy-3-cyclohexene-1-carboxylate synthase (Escherichia coli O17:K52:H18 (strain UMN026 / ExPEC)).